The primary structure comprises 117 residues: DNA-directed RNA polymerase subunit omega (117 aa).

A compositionally biased stretch (basic and acidic residues) spans 96 to 105 (KEEAEEEAKQ). A disordered region spans residues 96–117 (KEEAEEEAKQKNSRAAKAAAAE). Over residues 108 to 117 (SRAAKAAAAE) the composition is skewed to low complexity.

It belongs to the RNA polymerase subunit omega family. As to quaternary structure, the RNAP catalytic core consists of 2 alpha, 1 beta, 1 beta' and 1 omega subunit. When a sigma factor is associated with the core the holoenzyme is formed, which can initiate transcription.

The enzyme catalyses RNA(n) + a ribonucleoside 5'-triphosphate = RNA(n+1) + diphosphate. Promotes RNA polymerase assembly. Latches the N- and C-terminal regions of the beta' subunit thereby facilitating its interaction with the beta and alpha subunits. This is DNA-directed RNA polymerase subunit omega from Lactococcus lactis subsp. cremoris (strain SK11).